A 127-amino-acid polypeptide reads, in one-letter code: Small ribosomal subunit protein uS11 (127 aa).

This sequence belongs to the universal ribosomal protein uS11 family. As to quaternary structure, part of the 30S ribosomal subunit. Interacts with proteins S7 and S18. Binds to IF-3.

In terms of biological role, located on the platform of the 30S subunit, it bridges several disparate RNA helices of the 16S rRNA. Forms part of the Shine-Dalgarno cleft in the 70S ribosome. This chain is Small ribosomal subunit protein uS11, found in Rickettsia canadensis (strain McKiel).